The primary structure comprises 478 residues: Sedoheptulokinase (478 aa).

Belongs to the FGGY kinase family. As to expression, strongly expressed in liver, kidney and pancreas. Expressed at lower levels in placenta and heart. Very weakly expressed in lung and brain.

It is found in the cytoplasm. It catalyses the reaction sedoheptulose + ATP = D-sedoheptulose 7-phosphate + ADP + H(+). In terms of biological role, acts as a modulator of macrophage activation through control of glucose metabolism. This Homo sapiens (Human) protein is Sedoheptulokinase.